Reading from the N-terminus, the 428-residue chain is Cell division protein DamX (428 aa).

The interval 1 to 99 is disordered; the sequence is MDEFKPEDEL…KRKKAASKPA (99 aa). The Cytoplasmic segment spans residues 1-103; sequence MDEFKPEDEL…AASKPASRQY (103 aa). Composition is skewed to basic and acidic residues over residues 7–36 and 50–64; these read EDELKPDPSDRRTGRSRQSSERSERTERGE and DDRRPTRAQKERNEE. Residues 55–87 adopt a coiled-coil conformation; it reads TRAQKERNEEPEIEEEIDESEDETVDEERVERR. The segment covering 65–82 has biased composition (acidic residues); that stretch reads PEIEEEIDESEDETVDEE. Residues 86–95 are compositionally biased toward basic residues; sequence RRPRKRKKAA. A helical membrane pass occupies residues 104 to 124; sequence MMMGVGILVLLLLIIGIGSAL. At 125–428 the chain is on the periplasmic side; sequence KAPSTTSSDQ…PLRQVQADLK (304 aa). 2 disordered regions span residues 149-190 and 226-344; these read TDQA…VATD and EPAT…KSAP. Polar residues predominate over residues 236-257; the sequence is GNASRDTAKTQTAERPSTTRPA. Over residues 288-334 the composition is skewed to low complexity; that stretch reads PAAPVASTKAPAATSTPAPKETATTAPVQTASPAQTTATPAAGAKTA. Positions 342 to 419 constitute an SPOR domain; that stretch reads SAPSSHYTLQ…VQAKNPWAKP (78 aa).

This sequence belongs to the DamX family. Interacts in vitro with multiple Fts proteins, including FtsQ and FtsN.

It localises to the cell inner membrane. Its function is as follows. Non-essential cell division protein. The chain is Cell division protein DamX from Escherichia coli (strain K12).